We begin with the raw amino-acid sequence, 57 residues long: Non-structural protein 3a (57 aa).

A signal peptide spans 1 to 23 (MIQSPTSFLIVLILLWCKLVLSC).

In terms of biological role, involved in resistance to IFN. This is Non-structural protein 3a from Avian infectious bronchitis virus (strain Beaudette) (IBV).